A 1235-amino-acid chain; its full sequence is ATP-dependent helicase/nuclease subunit A (1235 aa).

The UvrD-like helicase ATP-binding domain occupies 12-482 (SLWTDDQWKA…IDLSQNFRSR (471 aa)). An ATP-binding site is contributed by 33-40 (AAAGSGKT). The UvrD-like helicase C-terminal domain occupies 509-800 (AAELTLGANF…RMMTIHASKG (292 aa)).

This sequence belongs to the helicase family. AddA subfamily. In terms of assembly, heterodimer of AddA and AddB/RexB. It depends on Mg(2+) as a cofactor.

The enzyme catalyses Couples ATP hydrolysis with the unwinding of duplex DNA by translocating in the 3'-5' direction.. The catalysed reaction is ATP + H2O = ADP + phosphate + H(+). The heterodimer acts as both an ATP-dependent DNA helicase and an ATP-dependent, dual-direction single-stranded exonuclease. Recognizes the chi site generating a DNA molecule suitable for the initiation of homologous recombination. The AddA nuclease domain is required for chi fragment generation; this subunit has the helicase and 3' -&gt; 5' nuclease activities. This chain is ATP-dependent helicase/nuclease subunit A, found in Listeria monocytogenes serovar 1/2a (strain ATCC BAA-679 / EGD-e).